Here is a 1002-residue protein sequence, read N- to C-terminus: Probable transport protein MmpL10 (1002 aa).

12 helical membrane-spanning segments follow: residues 1–21, 177–197, 199–219, 228–248, 268–288, 306–326, 358–378, 806–826, 835–855, 862–882, 901–921, and 923–943; these read MVGC…SLAE, IAVM…TMLL, LVTI…VSLV, AIVL…VFLI, AMMS…ITFL, AIGI…ILVL, YLGA…LAHF, IVAV…RAIV, VVIS…VFLG, VPGL…MLLA, VRCT…SMSG, and LFSS…GILI.

Belongs to the resistance-nodulation-cell division (RND) (TC 2.A.6) family. MmpL subfamily.

It is found in the cell membrane. The polypeptide is Probable transport protein MmpL10 (mmpL10) (Mycobacterium bovis (strain ATCC BAA-935 / AF2122/97)).